A 291-amino-acid chain; its full sequence is Ribonuclease Z (291 aa).

Zn(2+)-binding residues include His61, His63, Asp65, His66, His133, Asp201, and His257. The active-site Proton acceptor is the Asp65.

It belongs to the RNase Z family. In terms of assembly, homodimer. It depends on Zn(2+) as a cofactor.

The catalysed reaction is Endonucleolytic cleavage of RNA, removing extra 3' nucleotides from tRNA precursor, generating 3' termini of tRNAs. A 3'-hydroxy group is left at the tRNA terminus and a 5'-phosphoryl group is left at the trailer molecule.. In terms of biological role, zinc phosphodiesterase, which displays some tRNA 3'-processing endonuclease activity. Probably involved in tRNA maturation, by removing a 3'-trailer from precursor tRNA. This Saccharolobus islandicus (strain L.S.2.15 / Lassen #1) (Sulfolobus islandicus) protein is Ribonuclease Z.